A 637-amino-acid chain; its full sequence is Biosynthetic arginine decarboxylase (637 aa).

The residue at position 101 (lysine 101) is an N6-(pyridoxal phosphate)lysine. 286–296 (FDVGGGLAVDY) serves as a coordination point for substrate.

The protein belongs to the Orn/Lys/Arg decarboxylase class-II family. SpeA subfamily. Mg(2+) serves as cofactor. Requires pyridoxal 5'-phosphate as cofactor.

The catalysed reaction is L-arginine + H(+) = agmatine + CO2. It participates in amine and polyamine biosynthesis; agmatine biosynthesis; agmatine from L-arginine: step 1/1. Functionally, catalyzes the biosynthesis of agmatine from arginine. This is Biosynthetic arginine decarboxylase from Shewanella putrefaciens (strain CN-32 / ATCC BAA-453).